A 509-amino-acid chain; its full sequence is Transmembrane protein 180 (509 aa).

The Extracellular portion of the chain corresponds to 1–10 (MGLRLLACLF). A helical membrane pass occupies residues 11–42 (HLPTAVIYGSLSLFVSILHNVFLLYYVDTFVS). At 43–54 (VYKIDKLSFWIG) the chain is on the cytoplasmic side. Residues 55–73 (ETVFLIWNSLNDPLFGWLS) form a helical membrane-spanning segment. Residues 74–98 (DRVFLSTQQPGAEISSPEVVLKRLR) are Extracellular-facing. Residues 99–116 (ALSHNGPLFAISFLAFWV) traverse the membrane as a helical segment. The Cytoplasmic segment spans residues 117 to 124 (AWAHPGLQ). The chain crosses the membrane as a helical span at residues 125–149 (FLLCLCMYDSFLTMVDLHHNALLAD). The Extracellular segment spans residues 150–153 (LAVS). Residues 154-177 (AKDRTSLNFYCSFFSAIGSLSVFM) form a helical membrane-spanning segment. Residues 178–189 (SYAVWNKEDFFS) lie on the Cytoplasmic side of the membrane. The helical transmembrane segment at 190 to 221 (FRIFCIVLAFCSIVGFTLSTQLLRQRFETDGK) threads the bilayer. Residues 222–259 (AKWDQESTLKELYIEKLSVPQEKRITLVEYLQQLSRHR) lie on the Extracellular side of the membrane. Residues 260–287 (NFLWFVCMNLIQVFHCHFNSNFFPLFLE) traverse the membrane as a helical segment. The Cytoplasmic segment spans residues 288 to 300 (HLLSDKISVSTGS). The helical transmembrane segment at 301 to 320 (FLLGISYIAPHLNNLYFLSL) threads the bilayer. At 321 to 325 (CRRWG) the chain is on the extracellular side. A helical transmembrane segment spans residues 326-345 (VYAVVRGLFFLKLALSVVML). Topologically, residues 346-353 (LAGPDQVY) are cytoplasmic. The chain crosses the membrane as a helical span at residues 354-388 (LLCIFIASNRVFTEGTCKLLNLVVTDLVDEDLVLN). Residues 389–397 (RRKQAASAL) are Extracellular-facing. The chain crosses the membrane as a helical span at residues 398-424 (LFGMVALVTKPGQTFAPLIGTWLLCVY). Residues 425 to 458 (TGYDIFQRNPLSNVVSAQPKLESDTILEPTLRQG) lie on the Cytoplasmic side of the membrane. The helical transmembrane segment at 459 to 477 (CFYLLVFVPITCALLQLLS) threads the bilayer. The Extracellular portion of the chain corresponds to 478-509 (WTQFSLHGKRLQMVKAQRQGLMQGRAPEIKMI).

The protein localises to the cell membrane. This chain is Transmembrane protein 180, found in Gallus gallus (Chicken).